The following is a 205-amino-acid chain: Ribosomal RNA small subunit methyltransferase G (205 aa).

Residues glycine 73, leucine 78, 124–125 (VE), and arginine 139 contribute to the S-adenosyl-L-methionine site.

This sequence belongs to the methyltransferase superfamily. RNA methyltransferase RsmG family.

Its subcellular location is the cytoplasm. The enzyme catalyses guanosine(527) in 16S rRNA + S-adenosyl-L-methionine = N(7)-methylguanosine(527) in 16S rRNA + S-adenosyl-L-homocysteine. In terms of biological role, specifically methylates the N7 position of guanine in position 527 of 16S rRNA. The chain is Ribosomal RNA small subunit methyltransferase G from Erwinia tasmaniensis (strain DSM 17950 / CFBP 7177 / CIP 109463 / NCPPB 4357 / Et1/99).